We begin with the raw amino-acid sequence, 64 residues long: uncharacterized protein (64 aa).

The next 2 helical transmembrane spans lie at 4–24 (IYQY…WLAY) and 35–55 (MYLN…TFGM).

Its subcellular location is the cell membrane. This is an uncharacterized protein from Bacillus subtilis (strain 168).